An 804-amino-acid chain; its full sequence is Leucine--tRNA ligase (804 aa).

The 'HIGH' region motif lies at 40-51; it reads PYPSGAGLHVGH. The 'KMSKS' region motif lies at 576–580; the sequence is KMSKS. An ATP-binding site is contributed by Lys-579.

Belongs to the class-I aminoacyl-tRNA synthetase family.

The protein localises to the cytoplasm. The catalysed reaction is tRNA(Leu) + L-leucine + ATP = L-leucyl-tRNA(Leu) + AMP + diphosphate. The protein is Leucine--tRNA ligase of Staphylococcus haemolyticus (strain JCSC1435).